A 60-amino-acid chain; its full sequence is Large ribosomal subunit protein bL32 (60 aa).

Basic residues predominate over residues 1 to 23 (MACPKKKTSNAKRDQRRAHWRKQ). The interval 1 to 60 (MACPKKKTSNAKRDQRRAHWRKQAAREAQKALSLGKSVLSGRSNSFVYPTKEEEEGEDEE) is disordered.

It belongs to the bacterial ribosomal protein bL32 family.

In Microcystis aeruginosa (strain NIES-843 / IAM M-2473), this protein is Large ribosomal subunit protein bL32.